Reading from the N-terminus, the 240-residue chain is 2,3,4,5-tetrahydropyridine-2,6-dicarboxylate N-acetyltransferase (240 aa).

This sequence belongs to the transferase hexapeptide repeat family. DapH subfamily.

It carries out the reaction (S)-2,3,4,5-tetrahydrodipicolinate + acetyl-CoA + H2O = L-2-acetamido-6-oxoheptanedioate + CoA. Its pathway is amino-acid biosynthesis; L-lysine biosynthesis via DAP pathway; LL-2,6-diaminopimelate from (S)-tetrahydrodipicolinate (acetylase route): step 1/3. Its function is as follows. Catalyzes the transfer of an acetyl group from acetyl-CoA to tetrahydrodipicolinate. The sequence is that of 2,3,4,5-tetrahydropyridine-2,6-dicarboxylate N-acetyltransferase from Staphylococcus epidermidis (strain ATCC 35984 / DSM 28319 / BCRC 17069 / CCUG 31568 / BM 3577 / RP62A).